Reading from the N-terminus, the 329-residue chain is GTP 3',8-cyclase (329 aa).

One can recognise a Radical SAM core domain in the interval 8 to 234 (AFARKFYYLR…QLRQRSDGPA (227 aa)). GTP is bound at residue R17. 2 residues coordinate [4Fe-4S] cluster: C24 and C28. Y30 is a binding site for S-adenosyl-L-methionine. Residue C31 participates in [4Fe-4S] cluster binding. R68 contributes to the GTP binding site. G72 lines the S-adenosyl-L-methionine pocket. Residue T99 participates in GTP binding. Residue S123 participates in S-adenosyl-L-methionine binding. K160 lines the GTP pocket. M194 contacts S-adenosyl-L-methionine. [4Fe-4S] cluster is bound by residues C257 and C260. Residue 262–264 (RLR) participates in GTP binding. C274 provides a ligand contact to [4Fe-4S] cluster.

It belongs to the radical SAM superfamily. MoaA family. In terms of assembly, monomer and homodimer. [4Fe-4S] cluster is required as a cofactor.

It catalyses the reaction GTP + AH2 + S-adenosyl-L-methionine = (8S)-3',8-cyclo-7,8-dihydroguanosine 5'-triphosphate + 5'-deoxyadenosine + L-methionine + A + H(+). Its pathway is cofactor biosynthesis; molybdopterin biosynthesis. Its function is as follows. Catalyzes the cyclization of GTP to (8S)-3',8-cyclo-7,8-dihydroguanosine 5'-triphosphate. This is GTP 3',8-cyclase from Escherichia coli (strain K12 / MC4100 / BW2952).